Consider the following 360-residue polypeptide: Protein Wnt-2 (360 aa).

The N-terminal stretch at M1–S25 is a signal peptide. 11 cysteine pairs are disulfide-bonded: C76–C87, C127–C135, C137–C157, C206–C220, C208–C215, C278–C309, C294–C304, C308–C348, C324–C339, C326–C336, and C331–C332. The O-palmitoleoyl serine; by PORCN moiety is linked to residue S212. A glycan (N-linked (GlcNAc...) asparagine) is linked at N295.

The protein belongs to the Wnt family. In terms of processing, palmitoleoylation is required for efficient binding to frizzled receptors. Depalmitoleoylation leads to Wnt signaling pathway inhibition.

It is found in the secreted. It localises to the extracellular space. Its subcellular location is the extracellular matrix. Its function is as follows. Ligand for members of the frizzled family of seven transmembrane receptors. Probable developmental protein. May be a signaling molecule which affects the development of discrete regions of tissues. Is likely to signal over only few cell diameters. This is Protein Wnt-2 (WNT2) from Muntiacus muntjak (Barking deer).